We begin with the raw amino-acid sequence, 358 residues long: tRNA (guanine(26)-N(2))-dimethyltransferase (358 aa).

The Trm1 methyltransferase domain occupies 5 to 354; the sequence is VIRREGKAVF…ATYGEVERVL (350 aa). 5 residues coordinate S-adenosyl-L-methionine: Arg-39, Arg-69, Asp-87, Asp-113, and Ala-114.

It belongs to the class I-like SAM-binding methyltransferase superfamily. Trm1 family.

It catalyses the reaction guanosine(26) in tRNA + 2 S-adenosyl-L-methionine = N(2)-dimethylguanosine(26) in tRNA + 2 S-adenosyl-L-homocysteine + 2 H(+). In terms of biological role, dimethylates a single guanine residue at position 26 of a number of tRNAs using S-adenosyl-L-methionine as donor of the methyl groups. The sequence is that of tRNA (guanine(26)-N(2))-dimethyltransferase from Pyrobaculum calidifontis (strain DSM 21063 / JCM 11548 / VA1).